Consider the following 139-residue polypeptide: Large ribosomal subunit protein uL13 (139 aa).

This sequence belongs to the universal ribosomal protein uL13 family. Part of the 50S ribosomal subunit.

In terms of biological role, this protein is one of the early assembly proteins of the 50S ribosomal subunit, although it is not seen to bind rRNA by itself. It is important during the early stages of 50S assembly. In Wolinella succinogenes (strain ATCC 29543 / DSM 1740 / CCUG 13145 / JCM 31913 / LMG 7466 / NCTC 11488 / FDC 602W) (Vibrio succinogenes), this protein is Large ribosomal subunit protein uL13.